Reading from the N-terminus, the 359-residue chain is 3-dehydroquinate synthase (359 aa).

NAD(+) contacts are provided by residues 71 to 76 (DGEQFK), 105 to 109 (GVIGD), 129 to 130 (TT), K142, K151, and 169 to 172 (CLQT). Positions 184, 247, and 264 each coordinate Zn(2+).

The protein belongs to the sugar phosphate cyclases superfamily. Dehydroquinate synthase family. The cofactor is NAD(+). Co(2+) serves as cofactor. It depends on Zn(2+) as a cofactor.

Its subcellular location is the cytoplasm. It catalyses the reaction 7-phospho-2-dehydro-3-deoxy-D-arabino-heptonate = 3-dehydroquinate + phosphate. It functions in the pathway metabolic intermediate biosynthesis; chorismate biosynthesis; chorismate from D-erythrose 4-phosphate and phosphoenolpyruvate: step 2/7. In terms of biological role, catalyzes the conversion of 3-deoxy-D-arabino-heptulosonate 7-phosphate (DAHP) to dehydroquinate (DHQ). This chain is 3-dehydroquinate synthase, found in Shewanella oneidensis (strain ATCC 700550 / JCM 31522 / CIP 106686 / LMG 19005 / NCIMB 14063 / MR-1).